Reading from the N-terminus, the 525-residue chain is Putative ribose/galactose/methyl galactoside import ATP-binding protein (525 aa).

A compositionally biased stretch (polar residues) spans Met-1 to Leu-15. The disordered stretch occupies residues Met-1–Gly-23. ABC transporter domains are found at residues Leu-33–Glu-269 and Lys-279–Lys-523. Residue Gly-65 to Ser-72 participates in ATP binding.

Belongs to the ABC transporter superfamily. Carbohydrate importer 2 (CUT2) (TC 3.A.1.2) family.

The protein localises to the cell inner membrane. The enzyme catalyses D-ribose(out) + ATP + H2O = D-ribose(in) + ADP + phosphate + H(+). The catalysed reaction is D-galactose(out) + ATP + H2O = D-galactose(in) + ADP + phosphate + H(+). Functionally, part of an ABC transporter complex involved in carbohydrate import. Could be involved in ribose, galactose and/or methyl galactoside import. Responsible for energy coupling to the transport system. This is Putative ribose/galactose/methyl galactoside import ATP-binding protein from Pseudomonas syringae pv. syringae (strain B728a).